A 549-amino-acid polypeptide reads, in one-letter code: Copalyl diphosphate synthase (549 aa).

The DXDDTA motif signature appears at 321–326 (DADDTA). The QXXDGSW motif motif lies at 451–457 (QRDDGSW).

This sequence belongs to the terpene synthase family. Mg(2+) is required as a cofactor.

It catalyses the reaction (2E,6E,10E)-geranylgeranyl diphosphate = (+)-copalyl diphosphate. In terms of biological role, involved in the biosynthesis of the labdane-type bicyclic diterpene labda-8(17),12(E),14-triene. Catalyzes the conversion of geranylgeranyl diphosphate (GGDP) into (+)-copalyl diphosphate. The polypeptide is Copalyl diphosphate synthase (Streptomyces anulatus (Streptomyces chrysomallus)).